A 1055-amino-acid polypeptide reads, in one-letter code: TNF receptor-associated factor homolog 1a (1055 aa).

The disordered stretch occupies residues 1–56 (MSESTNEDSGAGRSSLEENSNGQRSQSEEAIAEWRSSEQVENGTPSTSPPYWDIDD). Residues 37 to 46 (SEQVENGTPS) show a composition bias toward polar residues. Residues 68 to 191 (FGKNTWTIEK…SGCLTIKAQV (124 aa)) form the MATH domain. Disordered regions lie at residues 352-380 (PKKE…VERD), 431-590 (AESE…NGSY), 603-772 (FSNG…APII), and 820-845 (VGSS…SHPS). A compositionally biased stretch (basic and acidic residues) spans 433–446 (SEQKGKRGASEKEK). The stretch at 441–496 (ASEKEKKSKKKQAKQKKNKNKGKEMRKEDKVRTQTEEREIEKEECVRAIAESSAEK) forms a coiled coil. Residues 447–460 (KSKKKQAKQKKNKN) show a composition bias toward basic residues. Residues 461–486 (KGKEMRKEDKVRTQTEEREIEKEECV) are compositionally biased toward basic and acidic residues. The span at 502–513 (DVSDVSDSVDSS) shows a compositional bias: low complexity. Residues 524-537 (RESSPVHWEMDASE) show a composition bias toward basic and acidic residues. The span at 569–586 (MDDSSSTCSNDSIQSGVA) shows a compositional bias: polar residues. The span at 657-668 (QKPESPKERSPV) shows a compositional bias: basic and acidic residues. Polar residues-rich tracts occupy residues 723–740 (KSPS…QLQT) and 823–845 (SGFT…SHPS).

As to quaternary structure, interacts with AHK3. Interacts with ATG6, SINAT1, SINAT2, SINAT5 and SINAT6.

The protein resides in the cytoplasm. Functions redundantly with TRAF1B in the regulation of plant immune response. Contributes to the turnover of the nucleotide-binding domain and leucine-rich repeat-containing (NB-LRR) immune receptors SNC1 and RPS2. May associate with an E3 ubiquitin-protein ligase complex, which modulates ubiquitination and subsequent degradation of NB-LRR immune sensors to maintain their homeostasis. Functions redundantly with TRAF1B in the regulation of autophagosome formation. Required for SINAT1- and SINAT2-mediated ubiquitination and destabilization of ATG6. Functions as a molecular adapter that helps to regulate autophagy by modulating ATG6 stability. This chain is TNF receptor-associated factor homolog 1a, found in Arabidopsis thaliana (Mouse-ear cress).